A 592-amino-acid chain; its full sequence is Putative uric acid sigma-54-dependent transcriptional regulator UacR (592 aa).

The region spanning Ile-158–Asp-229 is the PAS domain. The Sigma-54 factor interaction domain occupies Leu-272–Asn-502. ATP is bound by residues Gly-300 to Glu-307 and Ala-364 to Glu-373. The H-T-H motif DNA-binding region spans Lys-567–Lys-585.

Its function is as follows. Essential for both formate-dependent and formate-independent uric acid degradation. May be directly involved in the transcription of uacF in response to hypoxanthine, xanthine, and uric acid. This chain is Putative uric acid sigma-54-dependent transcriptional regulator UacR, found in Escherichia coli (strain K12).